A 191-amino-acid chain; its full sequence is Cell division protein SepF (191 aa).

The span at 157–178 shows a compositional bias: polar residues; the sequence is YLNESPAQPVQTTTSFGRTATP. The tract at residues 157–191 is disordered; it reads YLNESPAQPVQTTTSFGRTATPTPAWGTDSRYAAQ.

This sequence belongs to the SepF family. As to quaternary structure, homodimer. Interacts with FtsZ.

It localises to the cytoplasm. Its function is as follows. Cell division protein that is part of the divisome complex and is recruited early to the Z-ring. Probably stimulates Z-ring formation, perhaps through the cross-linking of FtsZ protofilaments. Its function overlaps with FtsA. In Synechococcus elongatus (strain ATCC 33912 / PCC 7942 / FACHB-805) (Anacystis nidulans R2), this protein is Cell division protein SepF.